A 515-amino-acid polypeptide reads, in one-letter code: Bifunctional purine biosynthesis protein PurH (515 aa).

Residues 1 to 145 (MTKRALISVS…KNHASVTVVV (145 aa)) enclose the MGS-like domain.

Belongs to the PurH family.

The catalysed reaction is (6R)-10-formyltetrahydrofolate + 5-amino-1-(5-phospho-beta-D-ribosyl)imidazole-4-carboxamide = 5-formamido-1-(5-phospho-D-ribosyl)imidazole-4-carboxamide + (6S)-5,6,7,8-tetrahydrofolate. The enzyme catalyses IMP + H2O = 5-formamido-1-(5-phospho-D-ribosyl)imidazole-4-carboxamide. The protein operates within purine metabolism; IMP biosynthesis via de novo pathway; 5-formamido-1-(5-phospho-D-ribosyl)imidazole-4-carboxamide from 5-amino-1-(5-phospho-D-ribosyl)imidazole-4-carboxamide (10-formyl THF route): step 1/1. Its pathway is purine metabolism; IMP biosynthesis via de novo pathway; IMP from 5-formamido-1-(5-phospho-D-ribosyl)imidazole-4-carboxamide: step 1/1. The chain is Bifunctional purine biosynthesis protein PurH from Streptococcus pyogenes serotype M3 (strain ATCC BAA-595 / MGAS315).